Here is a 193-residue protein sequence, read N- to C-terminus: GTP cyclohydrolase 1 (193 aa).

The Zn(2+) site is built by cysteine 83, histidine 86, and cysteine 154.

This sequence belongs to the GTP cyclohydrolase I family. Homomer.

The enzyme catalyses GTP + H2O = 7,8-dihydroneopterin 3'-triphosphate + formate + H(+). Its pathway is cofactor biosynthesis; 7,8-dihydroneopterin triphosphate biosynthesis; 7,8-dihydroneopterin triphosphate from GTP: step 1/1. In Porphyromonas gingivalis (strain ATCC 33277 / DSM 20709 / CIP 103683 / JCM 12257 / NCTC 11834 / 2561), this protein is GTP cyclohydrolase 1.